The primary structure comprises 548 residues: Glucose-6-phosphate isomerase (548 aa).

The Proton donor role is filled by glutamate 355. Residues histidine 386 and lysine 514 contribute to the active site.

The protein belongs to the GPI family.

It localises to the cytoplasm. It carries out the reaction alpha-D-glucose 6-phosphate = beta-D-fructose 6-phosphate. The protein operates within carbohydrate biosynthesis; gluconeogenesis. It participates in carbohydrate degradation; glycolysis; D-glyceraldehyde 3-phosphate and glycerone phosphate from D-glucose: step 2/4. Functionally, catalyzes the reversible isomerization of glucose-6-phosphate to fructose-6-phosphate. This is Glucose-6-phosphate isomerase from Proteus mirabilis (strain HI4320).